We begin with the raw amino-acid sequence, 1327 residues long: Polarized growth protein L1 (1327 aa).

Positions 1-30 are cleaved as a signal peptide; it reads MRESFASLLATGAGKLALSLLFAATPFTSA. Residues 31 to 1169 are Extracellular-facing; it reads YTFNQVPSPN…FSQQNGKHLA (1139 aa). 17 N-linked (GlcNAc...) asparagine glycosylation sites follow: Asn74, Asn90, Asn105, Asn115, Asn132, Asn170, Asn217, Asn224, Asn235, Asn318, Asn342, Asn452, Asn475, Asn601, Asn639, Asn648, and Asn691. One copy of the Kelch 1 repeat lies at 595–641; that stretch reads NLYVAGNFSNNDGRNNIFSFKQGASDPTALPNRGLNRQVMTLYQNDS. The stretch at 699–754 is one Kelch 2 repeat; the sequence is QVLAVSGFFDSVNEFNGNPSTNVQDFAVWVPSRSNWLHNLDFFTLAMSGRLMTFAD. N-linked (GlcNAc...) asparagine glycosylation is found at Asn835, Asn852, Asn877, and Asn931. Kelch repeat units lie at residues 945–993 and 994–1040; these read DVFV…ISDT and QMYI…TIAN. Asn1000, Asn1006, and Asn1126 each carry an N-linked (GlcNAc...) asparagine glycan. A helical membrane pass occupies residues 1170–1190; that stretch reads LWAIVLIGLAIALVLTFLLVV. Residues 1191 to 1327 lie on the Cytoplasmic side of the membrane; that stretch reads AGILLEWYRN…VFDTILACSS (137 aa).

Belongs to the RAX2 family.

The protein resides in the cell membrane. In terms of biological role, has been identified within the cluster that mediates the biosynthesis of squalestatin, but as its expression does not follow that of the other cluster members and it is not conserved in close related clusters, L1 seems not to be involved in the biosynthesis of squalestatin. Probably plays a role as a cell polarity regulator. The protein is Polarized growth protein L1 of Phoma sp. (strain ATCC 20986 / MF5453).